The following is a 477-amino-acid chain: MLESVRIEPKMSYRKIVGVNGPLVIMDNIRFLKYAEMVSLTLPDGSVRQGQVLEVSGKKAVIQVFEGTAGIDVKETQVTFTGETMKMGMSEDVLGRIFNGSGRVIDGGPKIIPEDYLDIQGQPLNPYARIYPEEMIQTGISSIDVMNSIARGQKIPIFSASGLPHNEIAAQICRQAGLVKRKDSIDSSDDNFAIVFAAMGVNVETANFFRNSFEASGSIGRTALFLNLANDPTIERIITPRLALTAAEYLAYEREKHVLVIMTDMSSYADALREVSAAREEVPGRRGYPGYMYTDLSTIYERAGRLEGRNGSITQIPILTMPNDDITHPIPDLTGYITEGQIYVDRQMHNRQIYPPINVLPSLSRLMKSAIGEGMTRKDHGDVSNQLYAKYAIGKDAQAMKAVVGEDSLSAEDRISIEFLERFEREFISQRHDELRTVDQSLDIAWDLLKVFPREMLNRIPSDILDEFHSVAPVGVE.

ATP is bound at residue Arg-365.

The protein belongs to the ATPase alpha/beta chains family. In terms of assembly, V-ATPase is a heteromultimeric enzyme composed of a peripheral catalytic V1 complex (components A to H) attached to an integral membrane V0 proton pore complex (components: a, c, c', c'', d, e, f and VOA1).

It is found in the vacuole membrane. Functionally, non-catalytic subunit of the V1 complex of vacuolar(H+)-ATPase (V-ATPase), a multisubunit enzyme composed of a peripheral complex (V1) that hydrolyzes ATP and a membrane integral complex (V0) that translocates protons. V-ATPase is responsible for acidifying and maintaining the pH of intracellular compartments. This chain is V-type proton ATPase subunit B, found in Encephalitozoon cuniculi (strain GB-M1) (Microsporidian parasite).